The chain runs to 335 residues: Holliday junction branch migration complex subunit RuvB (335 aa).

A large ATPase domain (RuvB-L) region spans residues 1–181 (MDRIVEIEKY…FGMQFRLEFY (181 aa)). Residues Leu20, Arg21, Gly62, Lys65, Thr66, Thr67, 128–130 (EDY), Arg171, Tyr181, and Arg218 each bind ATP. Thr66 is a Mg(2+) binding site. Positions 182–252 (KDSELALILQ…RANEALNSLG (71 aa)) are small ATPAse domain (RuvB-S). The head domain (RuvB-H) stretch occupies residues 255 to 335 (ELGFDAMDLR…LNYEKTLFEE (81 aa)). Residues Arg309 and Arg314 each contribute to the DNA site.

The protein belongs to the RuvB family. Homohexamer. Forms an RuvA(8)-RuvB(12)-Holliday junction (HJ) complex. HJ DNA is sandwiched between 2 RuvA tetramers; dsDNA enters through RuvA and exits via RuvB. An RuvB hexamer assembles on each DNA strand where it exits the tetramer. Each RuvB hexamer is contacted by two RuvA subunits (via domain III) on 2 adjacent RuvB subunits; this complex drives branch migration. In the full resolvosome a probable DNA-RuvA(4)-RuvB(12)-RuvC(2) complex forms which resolves the HJ.

The protein localises to the cytoplasm. The catalysed reaction is ATP + H2O = ADP + phosphate + H(+). Functionally, the RuvA-RuvB-RuvC complex processes Holliday junction (HJ) DNA during genetic recombination and DNA repair, while the RuvA-RuvB complex plays an important role in the rescue of blocked DNA replication forks via replication fork reversal (RFR). RuvA specifically binds to HJ cruciform DNA, conferring on it an open structure. The RuvB hexamer acts as an ATP-dependent pump, pulling dsDNA into and through the RuvAB complex. RuvB forms 2 homohexamers on either side of HJ DNA bound by 1 or 2 RuvA tetramers; 4 subunits per hexamer contact DNA at a time. Coordinated motions by a converter formed by DNA-disengaged RuvB subunits stimulates ATP hydrolysis and nucleotide exchange. Immobilization of the converter enables RuvB to convert the ATP-contained energy into a lever motion, pulling 2 nucleotides of DNA out of the RuvA tetramer per ATP hydrolyzed, thus driving DNA branch migration. The RuvB motors rotate together with the DNA substrate, which together with the progressing nucleotide cycle form the mechanistic basis for DNA recombination by continuous HJ branch migration. Branch migration allows RuvC to scan DNA until it finds its consensus sequence, where it cleaves and resolves cruciform DNA. The protein is Holliday junction branch migration complex subunit RuvB of Campylobacter jejuni subsp. doylei (strain ATCC BAA-1458 / RM4099 / 269.97).